Reading from the N-terminus, the 130-residue chain is Fluoride-specific ion channel FluC (130 aa).

4 helical membrane-spanning segments follow: residues 3–23 (FVFLWAALGGAIGSSLRYFVG), 38–58 (LGTFSVNLIGCFVIGFMGHLA), 67–87 (FGIFFVTGVLGGFTTFSSYGL), and 102–122 (VSYVLGTNLLGLIGVAIGWFL). 2 residues coordinate Na(+): Gly-77 and Thr-80.

Belongs to the fluoride channel Fluc/FEX (TC 1.A.43) family.

Its subcellular location is the cell inner membrane. The catalysed reaction is fluoride(in) = fluoride(out). Na(+) is not transported, but it plays an essential structural role and its presence is essential for fluoride channel function. Its function is as follows. Fluoride-specific ion channel. Important for reducing fluoride concentration in the cell, thus reducing its toxicity. The chain is Fluoride-specific ion channel FluC from Helicobacter pylori (strain HPAG1).